A 311-amino-acid chain; its full sequence is MVTWIRGEELHARTKEWARSHVKRLEEVGITPKLAVLLLNDDPVELETQRRFVTLKARDVREIGGEVEIYELYSAPPERRTKEALRLIESLNRRDDVTGVIIQKPLPPFVDEKALFSALSPEKDVDALTPENKKRLLTDFDLDRDVLPCTPAGILELFKLYGIDVRGKDVVVVGKGELVGKPLAVMLMQLDATVTVLHALSKEREPYVKRADIVISAVGRPPELYKDNPWRLTGDMIKEGAVVVGVGGKVDPATKRWFFDVDEKSVAEKASYLTPNIGGVGLATRARVLKNLIRTTYQVAQRVLSPRLYEV.

Residue 174 to 176 (GKG) participates in NADP(+) binding.

This sequence belongs to the tetrahydrofolate dehydrogenase/cyclohydrolase family. Homodimer.

It carries out the reaction (6R)-5,10-methylene-5,6,7,8-tetrahydrofolate + NADP(+) = (6R)-5,10-methenyltetrahydrofolate + NADPH. It catalyses the reaction (6R)-5,10-methenyltetrahydrofolate + H2O = (6R)-10-formyltetrahydrofolate + H(+). It participates in one-carbon metabolism; tetrahydrofolate interconversion. Its function is as follows. Catalyzes the oxidation of 5,10-methylenetetrahydrofolate to 5,10-methenyltetrahydrofolate and then the hydrolysis of 5,10-methenyltetrahydrofolate to 10-formyltetrahydrofolate. In Pyrobaculum aerophilum (strain ATCC 51768 / DSM 7523 / JCM 9630 / CIP 104966 / NBRC 100827 / IM2), this protein is Bifunctional protein FolD.